Here is a 378-residue protein sequence, read N- to C-terminus: Acyl-coenzyme A diphosphatase NUDT19 (378 aa).

In terms of domain architecture, Nudix hydrolase spans His-7–Tyr-258. Residues Ser-105–Gly-126 carry the Nudix box motif. The Mg(2+) site is built by Glu-120 and Glu-124. Residues Ser-376–Leu-378 carry the Microbody targeting signal motif.

Belongs to the Nudix hydrolase family. In terms of assembly, monomer. It depends on Mg(2+) as a cofactor. Requires Mn(2+) as cofactor.

Its subcellular location is the peroxisome. The enzyme catalyses an acyl-CoA + H2O = an acyl-4'-phosphopantetheine + adenosine 3',5'-bisphosphate + 2 H(+). It carries out the reaction CoA + H2O = (R)-4'-phosphopantetheine + adenosine 3',5'-bisphosphate + 2 H(+). It catalyses the reaction hexanoyl-CoA + H2O = hexanoyl-4'-phosphopantetheine + adenosine 3',5'-bisphosphate + 2 H(+). The catalysed reaction is octanoyl-CoA + H2O = S-octanoyl-4'-phosphopantetheine + adenosine 3',5'-bisphosphate + 2 H(+). The enzyme catalyses butanoyl-CoA + H2O = S-butanoyl-4'-phosphopantetheine + adenosine 3',5'-bisphosphate + 2 H(+). It carries out the reaction propanoyl-CoA + H2O = propanoyl-4'-phosphopantetheine + adenosine 3',5'-bisphosphate + 2 H(+). It catalyses the reaction malonyl-CoA + H2O = malonyl-4'-phosphopantetheine + adenosine 3',5'-bisphosphate + 2 H(+). The catalysed reaction is succinyl-CoA + H2O = succinyl-4'-phosphopantetheine + adenosine 3',5'-bisphosphate + 2 H(+). The enzyme catalyses choloyl-CoA + H2O = S-choloyl-4'-phosphopantetheine + adenosine 3',5'-bisphosphate + 2 H(+). It carries out the reaction 4,8-dimethylnonanoyl-CoA + H2O = S-(4,8-dimethylnonanoyl)-4'-phosphopantetheine + adenosine 3',5'-bisphosphate + 2 H(+). It catalyses the reaction (9Z,12Z,15Z)-octadecatrienoyl-CoA + H2O = S-(9Z,12Z,15Z-octadecatrienoyl)-4'-phosphopantetheine + adenosine 3',5'-bisphosphate + 2 H(+). The catalysed reaction is (9Z,12Z)-octadecadienoyl-CoA + H2O = S-(9Z,12Z-octadecadienoyl)-4'-phosphopantetheine + adenosine 3',5'-bisphosphate + 2 H(+). The enzyme catalyses (9Z)-hexadecenoyl-CoA + H2O = S-(9Z-hexadecenoyl)-4'-phosphopantetheine + adenosine 3',5'-bisphosphate + 2 H(+). It carries out the reaction (9Z)-tetradecenoyl-CoA + H2O = S-(9Z-tetradecenoyl)-4'-phosphopantetheine + adenosine 3',5'-bisphosphate + 2 H(+). It catalyses the reaction (6Z)-octenoyl-CoA + H2O = S-(6Z-octenoyl)-4'-phosphopantetheine + adenosine 3',5'-bisphosphate + 2 H(+). The catalysed reaction is hexadecanoyl-CoA + H2O = S-hexadecanoyl-4'-phosphopantetheine + adenosine 3',5'-bisphosphate + 2 H(+). The enzyme catalyses tetradecanoyl-CoA + H2O = tetradecanoyl-4'-phosphopantetheine + adenosine 3',5'-bisphosphate + 2 H(+). It carries out the reaction dodecanoyl-CoA + H2O = S-dodecanoyl-4'-phosphopantetheine + adenosine 3',5'-bisphosphate + 2 H(+). It catalyses the reaction a 5'-end CoA-ribonucleoside in mRNA + H2O = a 5'-end phospho-adenosine-phospho-ribonucleoside in mRNA + (R)-4'-phosphopantetheine + 2 H(+). Its function is as follows. Fatty acyl-coenzyme A (CoA) diphosphatase that hydrolyzes fatty acyl-CoA to yield acyl-4'-phosphopantetheine and adenosine 3',5'-bisphosphate. Mediates the hydrolysis of a wide range of CoA esters, including choloyl-CoA and branched-chain fatty-acyl-CoA esters and at low substrate concentrations medium and long-chain fatty-acyl-CoA esters are the primary substrates. Highest activity seen with medium-chain acyl-CoA esters and higher rates of activity seen with the unsaturated acyl-CoA esters compared with the saturated esters. Exhibits decapping activity towards dpCoA-capped RNAs in vitro. In Gallus gallus (Chicken), this protein is Acyl-coenzyme A diphosphatase NUDT19 (NUDT19).